Reading from the N-terminus, the 165-residue chain is MLVGNSWTRSLEPVSGHEHTEVDVPALPHRKTEVDVDVSLRLRTTSGPGLPVPASLHYGADDPYAIHAVFRGGDTDVEWVFARDLLREGLSAPAGAGDVQVQPCSDSPDGRPRVLLRLSSPDGNAELEADESDVRRFLRRADALVPPGRETRHLDLDELIARLVS.

The disordered stretch occupies residues 1-21; the sequence is MLVGNSWTRSLEPVSGHEHTE.

This sequence belongs to the SsgA family. As to quaternary structure, interacts with SsgA. Interacts with FtsZ (via N-terminus).

The protein localises to the cell septum. In terms of biological role, involved in sporulation-specific cell division. Required for early stages of sporulation. Important in the process of growth cessation prior to sporulation-specific cell division. Recruits cell division protein FtsZ to the future septum sites and tethers the contractile ring structure (Z ring) to the cytoplasmic membrane during sporulation. Stimulates polymerization and filament length of FtsZ in vitro. The sequence is that of Sporulation-specific cell division protein SsgB from Kineococcus radiotolerans (strain ATCC BAA-149 / DSM 14245 / SRS30216).